Here is a 537-residue protein sequence, read N- to C-terminus: Cytochrome P450 CYP12A2 (537 aa).

Cysteine 483 contacts heme.

It belongs to the cytochrome P450 family. Requires heme as cofactor.

The polypeptide is Cytochrome P450 CYP12A2 (CYP12A2) (Musca domestica (House fly)).